A 197-amino-acid chain; its full sequence is Prefoldin subunit 3 (197 aa).

Ala-2 is subject to N-acetylalanine. Position 59 is an N6-acetyllysine (Lys-59).

This sequence belongs to the prefoldin subunit alpha family. In terms of assembly, heterohexamer of two PFD-alpha type and four PFD-beta type subunits. Binds to the C-terminal part of VHL. Ubiquitous.

It is found in the cytoplasm. Its subcellular location is the nucleus. Its function is as follows. Binds specifically to cytosolic chaperonin (c-CPN) and transfers target proteins to it. Binds to nascent polypeptide chain and promotes folding in an environment in which there are many competing pathways for nonnative proteins. The protein is Prefoldin subunit 3 (VBP1) of Homo sapiens (Human).